A 363-amino-acid polypeptide reads, in one-letter code: Large ribosomal subunit protein uL4A (363 aa).

The residue at position 87 (Ser-87) is a Phosphoserine. The C-terminal-extended nuclear localization signal stretch occupies residues Pro-280–Asn-363.

It belongs to the universal ribosomal protein uL4 family. As to quaternary structure, component of the large ribosomal subunit (LSU). Mature yeast ribosomes consist of a small (40S) and a large (60S) subunit. The 40S small subunit contains 1 molecule of ribosomal RNA (18S rRNA) and at least 33 different proteins. The large 60S subunit contains 3 rRNA molecules (25S, 5.8S and 5S rRNA) and at least 46 different proteins. uL4 is associated with the polypeptide exit tunnel. uL4 interacts with its chaperone ACL4 and the nuclear import receptor KAP104.

The protein localises to the cytoplasm. The protein resides in the nucleus. Component of the ribosome, a large ribonucleoprotein complex responsible for the synthesis of proteins in the cell. The small ribosomal subunit (SSU) binds messenger RNAs (mRNAs) and translates the encoded message by selecting cognate aminoacyl-transfer RNA (tRNA) molecules. The large subunit (LSU) contains the ribosomal catalytic site termed the peptidyl transferase center (PTC), which catalyzes the formation of peptide bonds, thereby polymerizing the amino acids delivered by tRNAs into a polypeptide chain. The nascent polypeptides leave the ribosome through a tunnel in the LSU and interact with protein factors that function in enzymatic processing, targeting, and the membrane insertion of nascent chains at the exit of the ribosomal tunnel. uL4 participates in the regulation of the accumulation of its own mRNA. In Schizosaccharomyces pombe (strain 972 / ATCC 24843) (Fission yeast), this protein is Large ribosomal subunit protein uL4A (rpl402).